Here is a 584-residue protein sequence, read N- to C-terminus: Zinc finger and BTB domain-containing protein 7A (584 aa).

Positions 34–101 constitute a BTB domain; it reads CDVVILVEGR…AYTATLTVST (68 aa). The tract at residues 220 to 313 is disordered; it reads YGPGPPAERP…EDGDGPDVDG (94 aa). The mediates interaction with KHDRBS1 stretch occupies residues 277 to 584; that stretch reads EEEAASLSEA…TDGNFTAGLA (308 aa). A compositionally biased stretch (low complexity) spans 281–290; that stretch reads ASLSEAAPEP. Residues Ser-337 and Ser-341 each carry the phosphoserine modification. The tract at residues 349 to 584 is mediates interaction with RELA; sequence MDYYLKYFSG…TDGNFTAGLA (236 aa). Residues 377–584 are mediates interaction with SMAD4; that stretch reads RAKAFQKCPI…TDGNFTAGLA (208 aa). 2 C2H2-type zinc fingers span residues 382-404 and 410-432; these read QKCP…IRTH and YECN…MRKH. Residue Lys-436 forms a Glycyl lysine isopeptide (Lys-Gly) (interchain with G-Cter in SUMO2) linkage. The C2H2-type 3 zinc-finger motif lies at 438 to 460; it reads YLCQQCGAAFAHNYDLKNHMRVH. The segment at 466–490 adopts a C2H2-type 4; atypical zinc-finger fold; it reads YQCDSCCKTFVRSDHLHRHLKKDGC. The disordered stretch occupies residues 486–584; sequence KKDGCNGVPS…TDGNFTAGLA (99 aa). Residues 505–527 show a composition bias toward low complexity; that stretch reads GGAPDPSPGATATPGAPAQPSSP. 3 positions are modified to phosphoserine: Ser-511, Ser-525, and Ser-526. Over residues 528 to 540 the composition is skewed to basic and acidic residues; sequence DARRNGQEKHFKD. A Glycyl lysine isopeptide (Lys-Gly) (interchain with G-Cter in SUMO2) cross-link involves residue Lys-539. A Phosphoserine modification is found at Ser-549. Over residues 560–572 the composition is skewed to gly residues; the sequence is GAGGGGDSGGGPG.

In terms of assembly, homodimer. Interacts with BCL6. Interacts with RELA; involved in the control by RELA of the accessibility of target gene promoters. Interacts with AR (via NR LBD domain); the interaction is direct and androgen-dependent. Interacts with NCOR1. Interacts with NCOR2. Interacts with SMAD4; the interaction is direct and stimulated by TGFB1. Interacts with HDAC1. Interacts with SP1; ZBTB7A prevents the binding to GC-rich motifs in promoters and represses the transcriptional activity of SP1. Interacts with the DNA-dependent protein kinase complex/DNA-PKc. Interacts with KHDRBS1; negatively regulates KHDRBS1 splicing activity. Sumoylated. Undergoes sumoylation with SUMO1 that may regulate its transcriptional activity. As to expression, widely expressed. In normal thymus, expressed in medullary epithelial cells and Hassle's corpuscles (at protein level). In tonsil, expressed in squamous epithelium and germinal center lymphocytes (at protein level). Up-regulated in a subset of lymphomas, as well as in a subset of breast, lung, colon, prostate and bladder carcinomas (at protein level). Expressed in adipose tissues.

It is found in the nucleus. Functionally, transcription factor that represses the transcription of a wide range of genes involved in cell proliferation and differentiation. Directly and specifically binds to the consensus sequence 5'-[GA][CA]GACCCCCCCCC-3' and represses transcription both by regulating the organization of chromatin and through the direct recruitment of transcription factors to gene regulatory regions. Negatively regulates SMAD4 transcriptional activity in the TGF-beta signaling pathway through these two mechanisms. That is, recruits the chromatin regulator HDAC1 to the SMAD4-DNA complex and in parallel prevents the recruitment of the transcriptional activators CREBBP and EP300. Collaborates with transcription factors like RELA to modify the accessibility of gene transcription regulatory regions to secondary transcription factors. Also directly interacts with transcription factors like SP1 to prevent their binding to DNA. Functions as an androgen receptor/AR transcriptional corepressor by recruiting NCOR1 and NCOR2 to the androgen response elements/ARE on target genes. Thereby, negatively regulates androgen receptor signaling and androgen-induced cell proliferation. Involved in the switch between fetal and adult globin expression during erythroid cells maturation. Through its interaction with the NuRD complex regulates chromatin at the fetal globin genes to repress their transcription. Specifically represses the transcription of the tumor suppressor ARF isoform from the CDKN2A gene. Efficiently abrogates E2F1-dependent CDKN2A transactivation. Regulates chondrogenesis through the transcriptional repression of specific genes via a mechanism that also requires histone deacetylation. Regulates cell proliferation through the transcriptional regulation of genes involved in glycolysis. Involved in adipogenesis through the regulation of genes involved in adipocyte differentiation. Plays a key role in the differentiation of lymphoid progenitors into B and T lineages. Promotes differentiation towards the B lineage by inhibiting the T-cell instructive Notch signaling pathway through the specific transcriptional repression of Notch downstream target genes. Also regulates osteoclast differentiation. May also play a role, independently of its transcriptional activity, in double-strand break repair via classical non-homologous end joining/cNHEJ. Recruited to double-strand break sites on damage DNA, interacts with the DNA-dependent protein kinase complex and directly regulates its stability and activity in DNA repair. May also modulate the splicing activity of KHDRBS1 toward BCL2L1 in a mechanism which is histone deacetylase-dependent and thereby negatively regulates the pro-apoptotic effect of KHDRBS1. The protein is Zinc finger and BTB domain-containing protein 7A of Homo sapiens (Human).